The primary structure comprises 543 residues: Chaperonin GroEL (543 aa).

Residues 29-32 (TLGP), K50, 86-90 (DGTTT), G413, 480-482 (NAA), and D496 contribute to the ATP site. Residues 524–543 (EKPEKKESTPASAGAGDMDF) form a disordered region.

This sequence belongs to the chaperonin (HSP60) family. As to quaternary structure, forms a cylinder of 14 subunits composed of two heptameric rings stacked back-to-back. Interacts with the co-chaperonin GroES.

Its subcellular location is the cytoplasm. The catalysed reaction is ATP + H2O + a folded polypeptide = ADP + phosphate + an unfolded polypeptide.. Its function is as follows. Together with its co-chaperonin GroES, plays an essential role in assisting protein folding. The GroEL-GroES system forms a nano-cage that allows encapsulation of the non-native substrate proteins and provides a physical environment optimized to promote and accelerate protein folding. The polypeptide is Chaperonin GroEL (Thermus thermophilus (strain ATCC BAA-163 / DSM 7039 / HB27)).